A 1025-amino-acid chain; its full sequence is Multidrug resistance protein MdtC (1025 aa).

The next 12 membrane-spanning stretches (helical) occupy residues 3-23, 333-353, 360-380, 387-407, 431-451, 469-489, 528-548, 853-873, 875-895, 897-917, 953-973, and 984-1004; these read FFAL…AITL, EVEQ…FLFL, IIPA…MYLC, LSLM…IVVL, VGFT…PLLL, VAIG…CGWM, LVGV…ISIP, VILI…LYES, VHPL…LLAL, LFNA…IGIV, PIMM…LSGG, and ITIV…TPVV.

Belongs to the resistance-nodulation-cell division (RND) (TC 2.A.6) family. MdtC subfamily. Part of a tripartite efflux system composed of MdtA, MdtB and MdtC. MdtC forms a heteromultimer with MdtB.

The protein localises to the cell inner membrane. Functionally, the MdtABC tripartite complex confers resistance against novobiocin and deoxycholate. The polypeptide is Multidrug resistance protein MdtC (Escherichia coli O9:H4 (strain HS)).